Consider the following 117-residue polypeptide: UPF0102 protein YPN_3432 (117 aa).

Belongs to the UPF0102 family.

This Yersinia pestis bv. Antiqua (strain Nepal516) protein is UPF0102 protein YPN_3432.